A 148-amino-acid chain; its full sequence is Large ribosomal subunit protein uL15 (148 aa).

A disordered region spans residues 1–51 (MNLSNLKPAEGSTKTRKRIGRGPGSGLGGTSTRGHKGAKSRSGYKNKIGFE). Residues 21–31 (RGPGSGLGGTS) are compositionally biased toward gly residues. Over residues 33–44 (RGHKGAKSRSGY) the composition is skewed to basic residues.

The protein belongs to the universal ribosomal protein uL15 family. As to quaternary structure, part of the 50S ribosomal subunit.

Its function is as follows. Binds to the 23S rRNA. This chain is Large ribosomal subunit protein uL15, found in Parabacteroides distasonis (strain ATCC 8503 / DSM 20701 / CIP 104284 / JCM 5825 / NCTC 11152).